Here is a 141-residue protein sequence, read N- to C-terminus: MAGNILLEVVTPEKIVVSETVQTVTAPGSEGEFGVLVGHTPFLATLKLGTLNFKDETGKVRAVFINGGFAETLPNKVTVLAESAERRCDIDADRCRLALERAQQRLESKENAVDFERAKRALARAQTRMSLAESRKMDGFQ.

This sequence belongs to the ATPase epsilon chain family. As to quaternary structure, F-type ATPases have 2 components, CF(1) - the catalytic core - and CF(0) - the membrane proton channel. CF(1) has five subunits: alpha(3), beta(3), gamma(1), delta(1), epsilon(1). CF(0) has three main subunits: a, b and c.

Its subcellular location is the cell inner membrane. Its function is as follows. Produces ATP from ADP in the presence of a proton gradient across the membrane. The polypeptide is ATP synthase epsilon chain (Desulfatibacillum aliphaticivorans).